The sequence spans 65 residues: Small ribosomal subunit protein bS21 (65 aa).

It belongs to the bacterial ribosomal protein bS21 family.

This Flavobacterium psychrophilum (strain ATCC 49511 / DSM 21280 / CIP 103535 / JIP02/86) protein is Small ribosomal subunit protein bS21.